Consider the following 125-residue polypeptide: Phosphoribosyl-AMP cyclohydrolase (125 aa).

Mg(2+) is bound at residue Asp-74. Cys-75 provides a ligand contact to Zn(2+). Asp-76 and Asp-78 together coordinate Mg(2+). Zn(2+)-binding residues include Cys-92 and Cys-99.

Belongs to the PRA-CH family. Homodimer. Mg(2+) serves as cofactor. Zn(2+) is required as a cofactor.

The protein resides in the cytoplasm. It carries out the reaction 1-(5-phospho-beta-D-ribosyl)-5'-AMP + H2O = 1-(5-phospho-beta-D-ribosyl)-5-[(5-phospho-beta-D-ribosylamino)methylideneamino]imidazole-4-carboxamide. The protein operates within amino-acid biosynthesis; L-histidine biosynthesis; L-histidine from 5-phospho-alpha-D-ribose 1-diphosphate: step 3/9. Functionally, catalyzes the hydrolysis of the adenine ring of phosphoribosyl-AMP. This is Phosphoribosyl-AMP cyclohydrolase from Trichlorobacter lovleyi (strain ATCC BAA-1151 / DSM 17278 / SZ) (Geobacter lovleyi).